The following is a 441-amino-acid chain: Interferon-related developmental regulator 2 (441 aa).

Residues 1–15 (MPRARKGNTPRKGGQ) show a composition bias toward basic residues. The segment at 1–72 (MPRARKGNTP…TVDEQGPQED (72 aa)) is disordered. Positions 63 to 72 (TVDEQGPQED) are enriched in acidic residues.

It belongs to the IFRD family. Associates with ribosomes; promoting ribosome inactivation.

Functionally, ribosome-binding protein that acts as an inhibitor of mRNA translation by promoting ribosome inactivation. Associates with the P- and E-sites of the ribosome and inserts a C-terminal helix into the mRNA exit channel to preclude translation. This is Interferon-related developmental regulator 2 from Oryctolagus cuniculus (Rabbit).